The chain runs to 187 residues: Transcriptional regulator VspR (187 aa).

Represses the transcription of several genes encoded within the Vibrio 7th pandemic island-1 (VSP-1), including dncV, VC_0176, VC_0178 and VC_0180. The protein is Transcriptional regulator VspR (vspR) of Vibrio cholerae serotype O1 (strain ATCC 39315 / El Tor Inaba N16961).